The primary structure comprises 70 residues: Large ribosomal subunit protein bL31 (70 aa).

Zn(2+)-binding residues include Cys-16, Cys-18, Cys-37, and Cys-40.

This sequence belongs to the bacterial ribosomal protein bL31 family. Type A subfamily. Part of the 50S ribosomal subunit. Requires Zn(2+) as cofactor.

Its function is as follows. Binds the 23S rRNA. The protein is Large ribosomal subunit protein bL31 of Psychromonas ingrahamii (strain DSM 17664 / CCUG 51855 / 37).